A 400-amino-acid polypeptide reads, in one-letter code: Nicotinate phosphoribosyltransferase (400 aa).

Histidine 220 bears the Phosphohistidine; by autocatalysis mark.

It belongs to the NAPRTase family. Post-translationally, transiently phosphorylated on a His residue during the reaction cycle. Phosphorylation strongly increases the affinity for substrates and increases the rate of nicotinate D-ribonucleotide production. Dephosphorylation regenerates the low-affinity form of the enzyme, leading to product release.

The enzyme catalyses nicotinate + 5-phospho-alpha-D-ribose 1-diphosphate + ATP + H2O = nicotinate beta-D-ribonucleotide + ADP + phosphate + diphosphate. Its pathway is cofactor biosynthesis; NAD(+) biosynthesis; nicotinate D-ribonucleotide from nicotinate: step 1/1. Catalyzes the synthesis of beta-nicotinate D-ribonucleotide from nicotinate and 5-phospho-D-ribose 1-phosphate at the expense of ATP. The chain is Nicotinate phosphoribosyltransferase from Salmonella newport (strain SL254).